A 356-amino-acid polypeptide reads, in one-letter code: L-amino acid-D/L-Glu epimerase (356 aa).

Substrate is bound by residues Arg25, Ser136, and 161–163 (KVK). Asp191 lines the Mg(2+) pocket. Asn193 contributes to the substrate binding site. The Mg(2+) site is built by Glu219 and Asp244. Substrate contacts are provided by residues Lys268, 296-298 (CMM), and 320-322 (DLD).

This sequence belongs to the mandelate racemase/muconate lactonizing enzyme family. Mg(2+) is required as a cofactor.

In terms of biological role, catalyzes the epimerization of dipeptides with L-Glu in the second position. Has epimerase activity with L-Ala-L-Glu, L-Pro-L-Glu, L-Val-L-Glu, L-Thr-L-Glu and L-Met-L-Glu (in vitro). This Francisella philomiragia subsp. philomiragia (strain ATCC 25017 / CCUG 19701 / FSC 153 / O#319-036) protein is L-amino acid-D/L-Glu epimerase.